The following is a 170-amino-acid chain: Probable calcium-binding protein CML29 (170 aa).

EF-hand domains lie at 27 to 62 (SYISSLVEAFQAFDSDNDGLVTAPELRGLLASLGLD), 63 to 98 (KPEHEVRDMLARADADRDGKLSVEELLDVMNAGQLG), and 138 to 170 (ASVEDCMEIIACMDGDGDGAISVEEFRLMAQLL). Residues Asp40, Asp42, Asp44, Glu51, Asp76, Asp78, Asp80, Lys82, Glu87, Asp151, Asp153, Asp155, and Glu162 each contribute to the Ca(2+) site.

Functionally, potential calcium sensor. The protein is Probable calcium-binding protein CML29 (CML29) of Oryza sativa subsp. japonica (Rice).